Here is a 397-residue protein sequence, read N- to C-terminus: Transcription factor TGAL6 (397 aa).

The region spanning 104–148 (PDKVLRRLAQNREAARKSRLRKKAYIQQLETSRLKLAQLEQELQR) is the bZIP domain. Positions 106-126 (KVLRRLAQNREAARKSRLRKK) are basic motif. A leucine-zipper region spans residues 132–146 (LETSRLKLAQLEQEL). A DOG1 domain is found at 175–390 (ALGFEIKYSH…RALSSLWAAR (216 aa)).

It belongs to the bZIP family.

The protein resides in the nucleus. Functionally, transcriptional regulator involved in defense response. The polypeptide is Transcription factor TGAL6 (Oryza sativa subsp. japonica (Rice)).